A 222-amino-acid polypeptide reads, in one-letter code: Extracellular protein ARB_03106 (222 aa).

The first 18 residues, 1–18 (MRLHSVLAVATAVGCAVA), serve as a signal peptide directing secretion. N-linked (GlcNAc...) asparagine glycans are attached at residues Asn-113 and Asn-126.

It localises to the secreted. The protein is Extracellular protein ARB_03106 of Arthroderma benhamiae (strain ATCC MYA-4681 / CBS 112371) (Trichophyton mentagrophytes).